A 278-amino-acid chain; its full sequence is Tryptophan 2,3-dioxygenase (278 aa).

Residues 47-51, Tyr109, and Arg113 each bind substrate; that span reads FIVQH. Heme is bound at residue His236. Substrate is bound at residue Thr250.

Belongs to the tryptophan 2,3-dioxygenase family. As to quaternary structure, homotetramer. It depends on heme as a cofactor.

The enzyme catalyses L-tryptophan + O2 = N-formyl-L-kynurenine. It participates in amino-acid degradation; L-tryptophan degradation via kynurenine pathway; L-kynurenine from L-tryptophan: step 1/2. Its function is as follows. Heme-dependent dioxygenase that catalyzes the oxidative cleavage of the L-tryptophan (L-Trp) pyrrole ring and converts L-tryptophan to N-formyl-L-kynurenine. Catalyzes the oxidative cleavage of the indole moiety. The polypeptide is Tryptophan 2,3-dioxygenase (Ralstonia pickettii (strain 12J)).